The primary structure comprises 109 residues: Homeobox protein E60 (109 aa).

The disordered stretch occupies residues 1 to 31 (PRTRRVKRSDGRGNGGTPEEKRPRTAFSGEQ). Residues 20-79 (EKRPRTAFSGEQLARLKREFAENRYLTERRRQQLSRDLGLNEAQIKIWFQNKRAKIKKAS) constitute a DNA-binding region (homeobox).

It belongs to the engrailed homeobox family.

The protein resides in the nucleus. The chain is Homeobox protein E60 from Apis mellifera (Honeybee).